A 258-amino-acid chain; its full sequence is Acyl-[acyl-carrier-protein]--UDP-N-acetylglucosamine O-acyltransferase (258 aa).

This sequence belongs to the transferase hexapeptide repeat family. LpxA subfamily. Homotrimer.

It is found in the cytoplasm. The enzyme catalyses a (3R)-hydroxyacyl-[ACP] + UDP-N-acetyl-alpha-D-glucosamine = a UDP-3-O-[(3R)-3-hydroxyacyl]-N-acetyl-alpha-D-glucosamine + holo-[ACP]. Its pathway is glycolipid biosynthesis; lipid IV(A) biosynthesis; lipid IV(A) from (3R)-3-hydroxytetradecanoyl-[acyl-carrier-protein] and UDP-N-acetyl-alpha-D-glucosamine: step 1/6. Functionally, involved in the biosynthesis of lipid A, a phosphorylated glycolipid that anchors the lipopolysaccharide to the outer membrane of the cell. The sequence is that of Acyl-[acyl-carrier-protein]--UDP-N-acetylglucosamine O-acyltransferase from Pseudomonas fluorescens (strain Pf0-1).